Here is a 302-residue protein sequence, read N- to C-terminus: Putative fructose-bisphosphate aldolase (302 aa).

The active-site Proton donor is Asp86. Zn(2+) is bound by residues His87, Asp116, Glu146, and His192. Gly193 is a binding site for dihydroxyacetone phosphate. His223 serves as a coordination point for Zn(2+). Dihydroxyacetone phosphate is bound by residues Gly224–Asp226 and Asn245–Arg248.

The protein belongs to the class II fructose-bisphosphate aldolase family. In terms of assembly, homodimer. Zn(2+) serves as cofactor.

It catalyses the reaction beta-D-fructose 1,6-bisphosphate = D-glyceraldehyde 3-phosphate + dihydroxyacetone phosphate. The protein operates within carbohydrate degradation; glycolysis; D-glyceraldehyde 3-phosphate and glycerone phosphate from D-glucose: step 4/4. Functionally, catalyzes the aldol condensation of dihydroxyacetone phosphate (DHAP or glycerone-phosphate) with glyceraldehyde 3-phosphate (G3P) to form fructose 1,6-bisphosphate (FBP) in gluconeogenesis and the reverse reaction in glycolysis. The polypeptide is Putative fructose-bisphosphate aldolase (Coccidioides immitis (strain RS) (Valley fever fungus)).